The sequence spans 135 residues: Small ribosomal subunit protein eS6 (135 aa).

Belongs to the eukaryotic ribosomal protein eS6 family.

This Methanospirillum hungatei JF-1 (strain ATCC 27890 / DSM 864 / NBRC 100397 / JF-1) protein is Small ribosomal subunit protein eS6.